The primary structure comprises 1120 residues: Phosphatidylinositide phosphatase SAC2 (1120 aa).

The SAC domain occupies 167–518 (YKIFMDSDSF…GDTISRQYAG (352 aa)). A hSac2 domain is found at 593-760 (RGAQEQVSLL…RHSKPHEDIM (168 aa)). 2 disordered regions span residues 837-881 (SSLE…SREN) and 979-1008 (PAPK…LPRP). Residues 851-860 (LKDHGPHSEE) are compositionally biased toward basic and acidic residues. Composition is skewed to polar residues over residues 864–879 (DSDS…SGSR) and 998–1007 (SSHSQNQLPR).

The protein localises to the membrane. It is found in the clathrin-coated pit. It localises to the early endosome. Its subcellular location is the recycling endosome. It carries out the reaction a myo-inositol phosphate + H2O = myo-inositol + phosphate. Its function is as follows. Inositol 4-phosphatase which mainly acts on phosphatidylinositol 4-phosphate. May be functionally linked to OCRL, which converts phosphatidylinositol 4,5-bisphosphate to phosphatidylinositol, for a sequential dephosphorylation of phosphatidylinositol 4,5-bisphosphate at the 5 and 4 position of inositol, thus playing an important role in the endocytic recycling. This Danio rerio (Zebrafish) protein is Phosphatidylinositide phosphatase SAC2.